The primary structure comprises 658 residues: Carnitine O-palmitoyltransferase 2, mitochondrial (658 aa).

A mitochondrion-targeting transit peptide spans 1–25 (MMPRLLFRAWPRCPSLVLGAPSRPL). The Mitochondrial matrix portion of the chain corresponds to 26-178 (SAVSGPDDYL…GLLEPEVFHL (153 aa)). 2 positions are modified to N6-succinyllysine: Lys69 and Lys85. Residues 179–208 (NPSKSDTDAFKRLIRFVPPSLSWYGAYLVN) constitute an intramembrane region (note=Mitochondrial inner membrane). The Mitochondrial matrix portion of the chain corresponds to 209 to 658 (AYPLDMSQYF…DALEGKAIKT (450 aa)). Lys239 carries the post-translational modification N6-acetyllysine; alternate. The residue at position 239 (Lys239) is an N6-succinyllysine; alternate. Residue Lys305 is modified to N6-acetyllysine. His372 serves as the catalytic Proton acceptor. 2 positions are modified to N6-succinyllysine: Lys424 and Lys439. CoA is bound at residue 452–464 (GKEFLKKKQLSPD). Tyr486, Ser488, and Thr499 together coordinate (R)-carnitine. 2 positions are modified to N6-acetyllysine; alternate: Lys510 and Lys544. N6-succinyllysine; alternate occurs at positions 510 and 544.

The protein belongs to the carnitine/choline acetyltransferase family.

It is found in the mitochondrion inner membrane. The enzyme catalyses (R)-carnitine + hexadecanoyl-CoA = O-hexadecanoyl-(R)-carnitine + CoA. It catalyses the reaction octanoyl-CoA + (R)-carnitine = O-octanoyl-(R)-carnitine + CoA. It carries out the reaction decanoyl-CoA + (R)-carnitine = O-decanoyl-(R)-carnitine + CoA. The catalysed reaction is dodecanoyl-CoA + (R)-carnitine = O-dodecanoyl-R-carnitine + CoA. The enzyme catalyses tetradecanoyl-CoA + (R)-carnitine = O-tetradecanoyl-(R)-carnitine + CoA. It catalyses the reaction (R)-carnitine + octadecanoyl-CoA = O-octadecanoyl-(R)-carnitine + CoA. It carries out the reaction eicosanoyl-CoA + (R)-carnitine = O-eicosanoyl-(R)-carnitine + CoA. The catalysed reaction is (9Z)-tetradecenoyl-CoA + (R)-carnitine = O-(9Z)-tetradecenoyl-(R)-carnitine + CoA. The enzyme catalyses (5Z)-tetradecenoyl-CoA + (R)-carnitine = O-(5Z)-tetradecenoyl-(R)-carnitine + CoA. It catalyses the reaction (R)-carnitine + (9Z)-octadecenoyl-CoA = O-(9Z)-octadecenoyl-(R)-carnitine + CoA. It carries out the reaction 4,8-dimethylnonanoyl-CoA + (R)-carnitine = O-4,8-dimethylnonanoyl-(R)-carnitine + CoA. Its pathway is lipid metabolism; fatty acid beta-oxidation. Its function is as follows. Involved in the intramitochondrial synthesis of acylcarnitines from accumulated acyl-CoA metabolites. Reconverts acylcarnitines back into the respective acyl-CoA esters that can then undergo beta-oxidation, an essential step for the mitochondrial uptake of long-chain fatty acids and their subsequent beta-oxidation in the mitochondrion. Active with medium (C8-C12) and long-chain (C14-C18) acyl-CoA esters. In Rattus norvegicus (Rat), this protein is Carnitine O-palmitoyltransferase 2, mitochondrial.